Reading from the N-terminus, the 293-residue chain is 4-diphosphocytidyl-2-C-methyl-D-erythritol kinase (293 aa).

Lys16 is a catalytic residue. ATP is bound at residue 99–109 (PMGAGLGGGSS). The active site involves Asp141.

This sequence belongs to the GHMP kinase family. IspE subfamily.

The enzyme catalyses 4-CDP-2-C-methyl-D-erythritol + ATP = 4-CDP-2-C-methyl-D-erythritol 2-phosphate + ADP + H(+). The protein operates within isoprenoid biosynthesis; isopentenyl diphosphate biosynthesis via DXP pathway; isopentenyl diphosphate from 1-deoxy-D-xylulose 5-phosphate: step 3/6. Catalyzes the phosphorylation of the position 2 hydroxy group of 4-diphosphocytidyl-2C-methyl-D-erythritol. The protein is 4-diphosphocytidyl-2-C-methyl-D-erythritol kinase of Burkholderia thailandensis (strain ATCC 700388 / DSM 13276 / CCUG 48851 / CIP 106301 / E264).